We begin with the raw amino-acid sequence, 249 residues long: Mannose-binding protein A (249 aa).

The first 20 residues, 1-20 (MLLFSSLPVLLLCVVTASYS), serve as a signal peptide directing secretion. The tract at residues 41 to 102 (VTNGTPGRDG…KGDPGDTSGV (62 aa)) is disordered. Over residues 48–60 (RDGRDGPKGEKGE) the composition is skewed to basic and acidic residues. Proline 54 carries the post-translational modification 4-hydroxyproline. 2 positions are modified to 5-hydroxylysine: lysine 55 and lysine 58. O-linked (Gal...) hydroxylysine glycans are attached at residues lysine 55 and lysine 58. Residues proline 61, proline 72, proline 78, and proline 89 each carry the 4-hydroxyproline modification. Residues 64-98 (GFRGSQGPPGKMGPPGNIGETGPLGPKGQKGDPGD) enclose the Collagen-like domain. 5-hydroxylysine occurs at positions 90 and 93. O-linked (Gal...) hydroxylysine glycosylation is found at lysine 90 and lysine 93. Residues 135–246 (SRKKLYVTNG…CSSSFLAVCE (112 aa)) enclose the C-type lectin domain. Cystine bridges form between cysteine 156–cysteine 245 and cysteine 223–cysteine 237. The Ca(2+) site is built by aspartate 189, glutamate 193, glutamate 213, asparagine 215, aspartate 216, glutamate 221, aspartate 222, asparagine 233, and aspartate 234. Residues 213 to 221 (EPNDHGSGE) are calcium-dependent carbohydrate binding.

Interacts with MASP1 and MASP2. Forms oligomeric complexes of 3, 4, 5 or, predominantly, 6 homotrimers. The homotrimers appear as globular heads that are connected to a central hub by thin stalks. Hydroxylated on lysine and proline residues within the collagen-like domain. Post-translationally, O-glycosylated. O-linked glycans on hydroxylysine residues consist of Glc-Gal disaccharides bound to the oxygen atom of post-translationally added hydroxyl groups. Detected in blood serum (at protein level). Expressed in liver. Weakly expressed in lung, testis and brain. Not detected in bone marrow and heart.

It is found in the secreted. Its function is as follows. Calcium-dependent lectin. Plays a role in the innate immune response by binding mannose, fucose and N-acetylglucosamine on bacteria, including strains of A.suis, H.parasuis and A.pleuropneumoniae, and activates the lectin complement pathway. According to some authors, it only binds mannose. The polypeptide is Mannose-binding protein A (Sus scrofa (Pig)).